A 137-amino-acid chain; its full sequence is Photosystem II reaction center W protein, chloroplastic (137 aa).

Residues 1–64 constitute a chloroplast transit peptide; it reads MATITASSSA…ETTTTTNKSM (64 aa). The transit peptide at 65–83 directs the protein to the thylakoid; the sequence is GASLLAAAAAATISNPAMA. Topologically, residues 84–103 are lumenal, thylakoid; sequence LVDERMSTEGTGLPFGLSNN. A helical membrane pass occupies residues 104–123; it reads LLGWILFGVFGLIWALYFVY. Over 124-137 the chain is Stromal; the sequence is ASGLEEDEESGLSL.

Part of the photosystem II complex. PSII is composed of 1 copy each of membrane proteins PsbA, PsbB, PsbC, PsbD, numerous small proteins, at least 3 peripheral proteins of the oxygen-evolving complex and a large number of cofactors. It forms dimeric complexes.

The protein resides in the plastid. Its subcellular location is the chloroplast thylakoid membrane. Functionally, stabilizes dimeric photosystem II (PSII). In its absence no dimeric PSII accumulates and there is a reduction of monomeric PSII. In Spinacia oleracea (Spinach), this protein is Photosystem II reaction center W protein, chloroplastic.